A 218-amino-acid chain; its full sequence is Ras-related protein R-Ras (218 aa).

The segment at 1–30 (MSSGAASGTGRGRPRGGGPGPGDPPPSETH) is disordered. Residues 7 to 20 (SGTGRGRPRGGGPG) are compositionally biased toward gly residues. Residue 36-44 (GGGGVGKSA) coordinates GTP. The Effector region motif lies at 58-66 (YDPTIEDSY). GTP contacts are provided by residues 83–87 (DTAGQ), 142–145 (NKAD), and 172–174 (SAK). Position 215 is a cysteine methyl ester (cysteine 215). Cysteine 215 carries S-geranylgeranyl cysteine lipidation. Residues 216–218 (VLL) constitute a propeptide, removed in mature form.

This sequence belongs to the small GTPase superfamily. Ras family. As to quaternary structure, interacts with PLCE1. Interacts (active GTP-bound form preferentially) with RGS14. Interacts with OSBPL3. Interacts with ZDHHC19. Post-translationally, S-palmitoylated by ZDHHC19, leading to increased association with membranes and with rafts/caveolae as well as enhanced cell viability.

It localises to the cell membrane. It carries out the reaction GTP + H2O = GDP + phosphate + H(+). GTP-binding protein with GTPase activity, likely involved in the regulation of MAPK signaling pathway and thereby controlling multiple cellular processes. Regulates the organization of the actin cytoskeleton. With OSPBL3, modulates integrin beta-1 (ITGB1) activity. This is Ras-related protein R-Ras (RRAS) from Homo sapiens (Human).